Here is a 117-residue protein sequence, read N- to C-terminus: Photosystem II reaction center Psb28 protein (117 aa).

It belongs to the Psb28 family. Part of the photosystem II complex.

The protein localises to the cellular thylakoid membrane. This Prochlorococcus marinus (strain MIT 9515) protein is Photosystem II reaction center Psb28 protein.